The sequence spans 438 residues: MKETKFELYELKPFIIDAVHRLGFYEPTDIQKRLIPAVLKKESVIGQSQTGTGKTHAYLLPLLNKIDPAKDVVQVVITAPTRELANQIYQEALKITQGEEGSQIRSKCFIGGTDKQKSIDKLKIQPHLVVGTPGRIADLIKEQALSVHKAESLVIDEADLMLDMGFLADVDYIGSRMPEDLQMLVFSATIPEKLKPFLKKYMENPKYAHVEPKQVTAAKIEHILIPSKHRDKDKLLFDIMSHLNPYLGIVFANTKNTADHIAQYLTGKGMKIGLLHGGLTPRERKKVMKQINDLEFTYIIATDLAARGIDIKGVSHVINYELPDDLDFYVHRVGRTARAGSSGQAMTIYELTDEDALVRLEKMGIEFEYLELEKGEWKKGDDRQRRKKRKKTPNEADEIAHRLVKKPKKVKPGYKKKMSYEMEKIKKKQRRNQSKKRK.

Residues 4–32 (TKFELYELKPFIIDAVHRLGFYEPTDIQK) carry the Q motif motif. Residues 35-208 (IPAVLKKESV…KKYMENPKYA (174 aa)) enclose the Helicase ATP-binding domain. 48–55 (SQTGTGKT) contributes to the ATP binding site. The DEAD box signature appears at 156 to 159 (DEAD). The region spanning 235-385 (LLFDIMSHLN…EWKKGDDRQR (151 aa)) is the Helicase C-terminal domain. The disordered stretch occupies residues 380–438 (GDDRQRRKKRKKTPNEADEIAHRLVKKPKKVKPGYKKKMSYEMEKIKKKQRRNQSKKRK). The span at 392 to 401 (TPNEADEIAH) shows a compositional bias: basic and acidic residues. 2 stretches are compositionally biased toward basic residues: residues 402–417 (RLVK…YKKK) and 425–438 (IKKK…KKRK).

Belongs to the DEAD box helicase family. Interacts with CspB when cells are transcriptionally active. May interact with RNA helicases CshA and DbpA (DeaD), may be a component of a possible RNA degradosome complex composed of rny, rnja, rnjb, pnp, pfkA and eno (although rnjA and rnjB's presence is unclear). Specifically interacts with pnp and rny.

The protein localises to the cytoplasm. Its subcellular location is the nucleoid. The catalysed reaction is ATP + H2O = ADP + phosphate + H(+). In terms of biological role, DEAD-box RNA helicase that plays a role in 70S ribosome assembly. May work in conjunction with the cold shock proteins to ensure proper initiation of transcription at low and optimal temperatures. The sequence is that of DEAD-box ATP-dependent RNA helicase CshB from Bacillus subtilis (strain 168).